The chain runs to 400 residues: Elongation factor Tu (400 aa).

One can recognise a tr-type G domain in the interval 10–208; the sequence is KPHVNVGTIG…AMDNYIPDPQ (199 aa). The tract at residues 19 to 26 is G1; that stretch reads GHIDHGKS. 19–26 provides a ligand contact to GTP; sequence GHIDHGKS. A Mg(2+)-binding site is contributed by Ser-26. Positions 60-64 are G2; that stretch reads GITIN. The G3 stretch occupies residues 81–84; the sequence is DCPG. GTP-binding positions include 81 to 85 and 136 to 139; these read DCPGH and NKTD. Residues 136–139 are G4; sequence NKTD. The G5 stretch occupies residues 174-176; that stretch reads SAL.

Belongs to the TRAFAC class translation factor GTPase superfamily. Classic translation factor GTPase family. EF-Tu/EF-1A subfamily. As to quaternary structure, monomer.

It is found in the cytoplasm. It carries out the reaction GTP + H2O = GDP + phosphate + H(+). Functionally, GTP hydrolase that promotes the GTP-dependent binding of aminoacyl-tRNA to the A-site of ribosomes during protein biosynthesis. This chain is Elongation factor Tu, found in Thermotoga maritima (strain ATCC 43589 / DSM 3109 / JCM 10099 / NBRC 100826 / MSB8).